Here is a 91-residue protein sequence, read N- to C-terminus: Small ribosomal subunit protein uS19 (91 aa).

Residues 72–91 (GEFSPTRKFGGHGDDKKKKK) are disordered. A compositionally biased stretch (basic and acidic residues) spans 82–91 (GHGDDKKKKK).

This sequence belongs to the universal ribosomal protein uS19 family.

Protein S19 forms a complex with S13 that binds strongly to the 16S ribosomal RNA. The sequence is that of Small ribosomal subunit protein uS19 from Spiroplasma kunkelii.